The sequence spans 94 residues: Putative toxin RelE4 (94 aa).

It belongs to the RelE toxin family.

Its function is as follows. Toxic component of a type II toxin-antitoxin (TA) system. Its cognate antitoxin is RelB4 (Potential). The polypeptide is Putative toxin RelE4 (relE4) (Methanocaldococcus jannaschii (strain ATCC 43067 / DSM 2661 / JAL-1 / JCM 10045 / NBRC 100440) (Methanococcus jannaschii)).